The following is a 92-amino-acid chain: Small ribosomal subunit protein uS19 (92 aa).

The protein belongs to the universal ribosomal protein uS19 family.

Functionally, protein S19 forms a complex with S13 that binds strongly to the 16S ribosomal RNA. In Rickettsia africae (strain ESF-5), this protein is Small ribosomal subunit protein uS19.